The primary structure comprises 791 residues: MAARNKQKKRAEPESDLCFAGKPMSVVESTIRWPHRYQSKKTKLQAPTKKPANKGGKKEDEEIIKQAKCHFDKALVDGVLINLNDDVYVTGLPGKLKFIAKVIELFEADDGVPYCRFRWYYRPEDTLIERFSHLVQPKRVFLSNDENDNPLTCIWSKVNIAKVPLPKITSRIEQRVIPPCDYYYDMKYEVPYLNFTSADDGSDASSSLSSDSALNCFENLHKDEKFLLDLYSGCGAMSTGFCMGASISGVKLITKWSVDINKFACDSLKLNHPETEVRNEAAEDFLALLKEWKRLCEKFSLVSSTEPVESISELEDEEVEENDDIDEASTGAELEPGEFEVEKFLGIMFGDPQGTGEKTLQLMVRWKGYNSSYDTWEPYSGLGNCKEKLKEYVIDGFKSHLLPLPGTVYTVCGGPPCQGISGYNRYRNNEAPLEDQKNQQLLVFLDIIDFLKPNYVLMENVVDLLRFSKGFLARHAVASFVAMNYQTRLGMMAAGSYGLPQLRNRVFLWAAQPSEKLPPYPLPTHEVAKKFNTPKEFKDLQVGRIQMEFLKLDNALTLADAISDLPPVTNYVANDVMDYNDAAPKTEFENFISLKRSETLLPAFGGDPTRRLFDHQPLVLGDDDLERVSYIPKQKGANYRDMPGVLVHNNKAEINPRFRAKLKSGKNVVPAYAISFIKGKSKKPFGRLWGDEIVNTVVTRAEPHNQCVIHPMQNRVLSVRENARLQGFPDCYKLCGTIKEKYIQVGNAVAVPVGVALGYAFGMASQGLTDDEPVIKLPFKYPECMQAKDQI.

The disordered stretch occupies residues tyrosine 37–glutamate 59. The 121-residue stretch at valine 79–aspartate 199 folds into the BAH domain. Positions lysine 225–leucine 768 constitute an SAM-dependent MTase C5-type domain. Residues valine 308 to glutamate 333 are a coiled coil. The Chromo domain maps to phenylalanine 339–leucine 404. Cysteine 417 is a catalytic residue.

Belongs to the class I-like SAM-binding methyltransferase superfamily. C5-methyltransferase family. As to expression, expressed in flowers. Not detected in leaves, roots, seedlings and plants prior formation of flower buds.

The protein localises to the nucleus. The catalysed reaction is a 2'-deoxycytidine in DNA + S-adenosyl-L-methionine = a 5-methyl-2'-deoxycytidine in DNA + S-adenosyl-L-homocysteine + H(+). Functionally, may be involved in the CpXpG methylation and in gene silencing. This Arabidopsis thaliana (Mouse-ear cress) protein is Putative DNA (cytosine-5)-methyltransferase CMT1 (CMT1).